Here is a 199-residue protein sequence, read N- to C-terminus: NAD(P)H dehydrogenase (quinone) (199 aa).

One can recognise a Flavodoxin-like domain in the interval 4–190 (VLVLYYSAYG…EAAKYQGAHV (187 aa)). FMN is bound by residues 10–15 (SAYGHI) and 78–80 (TRF). An NAD(+)-binding site is contributed by tyrosine 12. A substrate-binding site is contributed by tryptophan 98. Residues 113–119 (SSATQHG) and histidine 134 each bind FMN.

This sequence belongs to the WrbA family. Requires FMN as cofactor.

It catalyses the reaction a quinone + NADH + H(+) = a quinol + NAD(+). The catalysed reaction is a quinone + NADPH + H(+) = a quinol + NADP(+). This chain is NAD(P)H dehydrogenase (quinone), found in Rhizobium rhizogenes (strain K84 / ATCC BAA-868) (Agrobacterium radiobacter).